The primary structure comprises 407 residues: MKLTFFTMQFPVSSETFVLNQVTHFIDIGYDVEIIAVFPGDLVNRHAAFDRYNLAAKTHYLLPDDKDGKTAKLAQRLAIILPKILKPGTLKSFHIGRYGAQSSKLLLPAIVAANKKPFAADIFLVHFGYAGALANKLRELKVLQGKQVTVFHGADISRRHILEEHKKDYPRLFAQNELLLPISRLWQHKLIAMGCPAEKINVTRMGIEPEKFNLKLRDALHQPLRILSVARLTEKKGLGVAIEACRILKQQGGCFEYTIIGYGDLEAQLKTAIADGDLEDCVKLVGFKPQEEIKRYLDEADIFLLPSLTAADGDMEGIPVALMEAMAVGLPVVSSEHSGIPELIEHNVSGWLAPEGDAQALAAILLRLSQGEADVVPVVLAARAKVETEFNQHIAYRQLAEILERLA.

Belongs to the glycosyltransferase group 1 family. Glycosyltransferase 4 subfamily.

It participates in glycan metabolism; exopolysaccharide biosynthesis. In terms of biological role, involved in the biosynthesis of amylovoran which functions as a virulence factor. In Erwinia amylovora (Fire blight bacteria), this protein is Amylovoran biosynthesis glycosyltransferase AmsK (amsK).